A 365-amino-acid chain; its full sequence is MALTLSTTKTFTNINCSNNTSNITTFKPLKLPLFWPWQKVKMGPLSVSPMGFGTWAWGNQLLWGYQTSMDDQLQQAFELALENGINLFDTADSYGTGRLNGQSERLLGKFIKESQGLKGKQNEVVVATKFAAYPWRLTSGQFVNACRASLDRLQIDQLGIGQLHWSTASYAPLQELVLWDGLVQMYEKGLVRAVGVSNYGPQQLVKIHDYLKTRGVPLCSAQVQFSLLSMGKEQLEIKSICDELGIRLISYSPLGLGMLTGKYSSSKLPTGPRSLLFRQILPGLEPLLLALSEIAKKRGKTMPQVAINWCICKGTVPIPGIKSVRHVEDNLGALGWKLTNDEQLQLEYAAKESPKSMIQNIFQTR.

The N-terminal 15 residues, 1-15, are a transit peptide targeting the chloroplast; that stretch reads MALTLSTTKTFTNIN. Tyrosine 94 (proton donor) is an active-site residue.

It belongs to the aldo/keto reductase family. In terms of assembly, monomer. As to expression, expressed in cotyledons, embryos, flowers, shoots, roots and seeds.

The protein resides in the plastid. It localises to the chloroplast. It carries out the reaction pyridoxine + NADP(+) = pyridoxal + NADPH + H(+). Its pathway is cofactor degradation; B6 vitamer degradation; pyridoxal from pyridoxine (dehydrogenase route): step 1/1. Its function is as follows. Catalyzes the reduction of pyridoxal (PL) with NADPH and oxidation of pyridoxine (PN) with NADP(+). Involved in the PLP salvage pathway. This Arabidopsis thaliana (Mouse-ear cress) protein is Pyridoxal reductase, chloroplastic (PLR1).